Here is a 103-residue protein sequence, read N- to C-terminus: Large ribosomal subunit protein bL21 (103 aa).

This sequence belongs to the bacterial ribosomal protein bL21 family. In terms of assembly, part of the 50S ribosomal subunit. Contacts protein L20.

In terms of biological role, this protein binds to 23S rRNA in the presence of protein L20. The protein is Large ribosomal subunit protein bL21 of Bordetella avium (strain 197N).